The sequence spans 688 residues: Chaperone protein dnaK1 (688 aa).

At Thr-198 the chain carries Phosphothreonine; by autocatalysis. Residues 630–661 (DLPRDSYRERDAYNNRDYGRDYGRDYGRDSRP) are compositionally biased toward basic and acidic residues. The segment at 630–688 (DLPRDSYRERDAYNNRDYGRDYGRDYGRDSRPSYDNSRPPRKSPRPSYQDNWDDDDDWL) is disordered.

This sequence belongs to the heat shock protein 70 family.

Its function is as follows. Acts as a chaperone. The sequence is that of Chaperone protein dnaK1 (dnaK1) from Nostoc sp. (strain PCC 7120 / SAG 25.82 / UTEX 2576).